Reading from the N-terminus, the 169-residue chain is Pyrophosphate-energized proton pump 1 (169 aa).

3 helical membrane-spanning segments follow: residues 45–65, 114–134, and 141–161; these read YVVA…GIAM, VIPS…VLLI, and AFAA…LVAI.

Belongs to the H(+)-translocating pyrophosphatase (TC 3.A.10) family. Homodimer. Requires Mg(2+) as cofactor.

The protein localises to the cell inner membrane. It carries out the reaction diphosphate + H2O + H(+)(in) = 2 phosphate + 2 H(+)(out). In terms of biological role, proton pump that utilizes the energy of pyrophosphate hydrolysis as the driving force for proton movement across the membrane. Generates a proton motive force. The polypeptide is Pyrophosphate-energized proton pump 1 (hppA1) (Rhizobium leguminosarum bv. trifolii).